The chain runs to 142 residues: uncharacterized protein (142 aa).

One can recognise an N-acetyltransferase domain in the interval 1–120 (MADKFDANDE…TILKWEKNMD (120 aa)).

It belongs to the acetyltransferase family.

This is an uncharacterized protein from Streptococcus pyogenes serotype M3 (strain ATCC BAA-595 / MGAS315).